The sequence spans 112 residues: Cytochrome c2 (112 aa).

Cys14, Cys17, His18, and Met91 together coordinate heme c.

This sequence belongs to the cytochrome c family. Post-translationally, binds 1 heme c group covalently per subunit.

Cytochrome c2 is found mainly in purple, non-sulfur, photosynthetic bacteria where it functions as the electron donor to the oxidized bacteriochlorophyll in the photophosphorylation pathway. However, it may also have a role in the respiratory chain and is found in some non-photosynthetic bacteria. The polypeptide is Cytochrome c2 (cycA) (Rhodospirillum rubrum).